The sequence spans 398 residues: tRNA-specific 2-thiouridylase MnmA (398 aa).

ATP-binding positions include 20–27 and leucine 46; that span reads AMSGGVDS. The active-site Nucleophile is cysteine 114. The cysteines at positions 114 and 210 are disulfide-linked. Residue glycine 138 coordinates ATP. The interval 160-162 is interaction with tRNA; it reads RDQ. The Cysteine persulfide intermediate role is filled by cysteine 210.

It belongs to the MnmA/TRMU family.

The protein localises to the cytoplasm. The catalysed reaction is S-sulfanyl-L-cysteinyl-[protein] + uridine(34) in tRNA + AH2 + ATP = 2-thiouridine(34) in tRNA + L-cysteinyl-[protein] + A + AMP + diphosphate + H(+). Catalyzes the 2-thiolation of uridine at the wobble position (U34) of tRNA, leading to the formation of s(2)U34. In Brucella suis (strain ATCC 23445 / NCTC 10510), this protein is tRNA-specific 2-thiouridylase MnmA.